The chain runs to 931 residues: DNA mismatch repair protein MutS (931 aa).

Over residues 1 to 10 (MMDDTAMPAR) the composition is skewed to low complexity. The disordered stretch occupies residues 1–34 (MMDDTAMPARAEADAAEDELAAPAGIDRTAKADK). 674 to 681 (GPNMAGKS) serves as a coordination point for ATP.

Belongs to the DNA mismatch repair MutS family.

Functionally, this protein is involved in the repair of mismatches in DNA. It is possible that it carries out the mismatch recognition step. This protein has a weak ATPase activity. This Azorhizobium caulinodans (strain ATCC 43989 / DSM 5975 / JCM 20966 / LMG 6465 / NBRC 14845 / NCIMB 13405 / ORS 571) protein is DNA mismatch repair protein MutS.